The chain runs to 424 residues: CinA-like protein (424 aa).

The protein belongs to the CinA family.

The chain is CinA-like protein from Shewanella baltica (strain OS155 / ATCC BAA-1091).